The following is a 925-amino-acid chain: MTLWTVSPPAVSSEAEEKPVQDTVSLTAADQTWQVCVPLPIAALDFAAPHGYVGEVPLGCRVAVPWRGGEIRVGLVVGAGSSMGRHRLREALALLDSPEAPWVAPGTARGLTAWAEEAHLPPGLVWDDLLCTGWEPAHRHEVRAVPGADLSPYGETLPDTDWSRADLYPPALLDAAREQGLLDDRFLPDPPQVNRVVARDLNDVPPAARTQVVVTAQPWEAADPALCTPPHWEAVTGEGALTAKQQQAHDWLRAHGPQPSLGAWASGAKVGLPVVRKVADLGWAQEHPQAVPPPPAWKWLREHGPVASPAAWASAAGVRPAEVRRLMEGGAADYTFTPVTPPAAWAWLREHGPAETVSAWATGAGVSPSVAAGLLARGWAAQVQMPAPPPELPAAPLWAGPPLDELTALAADALPEEDRWRLHGGRPASRFAALAPRVARLLAQGRSVLILAPDHATLRRAWAGLGGLAALAGTRAALLSGQLSPRQREEIWRQVRAGDVRLVIGSALALSAPLPDLALLVVLEEGSDAYKLLSGSRAFVPDVAARVARSLRAALGLVGSVPAVESVPLPGLVLAPPRARVHVVDYAQPPAQPELGPLSSVHLTPGDLGYPISHDLARLLRQVQERGRQAALLAPRRGYSALLRCPRCDHVPGCPNCDVPLRFHQDRRQMECHQCGHHQSVPDRCDECGEQMWKARGPGTEWIAAEVEKLLPGFPVYRLDKDHQDDLAPLHAGEAGVVVGTQLLLAQPSPPNLALIGVTLADTWLGVSDFRASERYHRLLRQLAEWHPSRAPLLVVQTFQGDHPALKVLETGRDALAYPAAEERVRAELFYPPHARLAQIEVAARDRDRAKVAAQALADALHGAGAVATEVLGPAHAAVARVRGAYLYQLLLRARNDARLAELLGVLDTRSWGARVRVDVNPRST.

The Zn(2+) site is built by Cys-645, Cys-648, Cys-654, Cys-657, Cys-672, Cys-675, Cys-685, and Cys-688.

Belongs to the helicase family. PriA subfamily. As to quaternary structure, interacts with DnaB (DR_0549). Component of the replication restart primosome. It depends on Zn(2+) as a cofactor.

Its function is as follows. Initiates the restart of stalled replication forks, which reloads the replicative helicase on sites other than the origin of replication. Recognizes abandoned replication forks and remodels them to uncover a helicase loading site. Promotes assembly of the primosome at these replication forks. Recognizes and binds DNA at stalled replication forks, also binds single-stranded (ss)DNA. This Deinococcus radiodurans (strain ATCC 13939 / DSM 20539 / JCM 16871 / CCUG 27074 / LMG 4051 / NBRC 15346 / NCIMB 9279 / VKM B-1422 / R1) protein is Probable replication restart protein PriA.